A 250-amino-acid chain; its full sequence is Probable transcriptional regulatory protein RER_29220 (250 aa).

Belongs to the TACO1 family.

It is found in the cytoplasm. This Rhodococcus erythropolis (strain PR4 / NBRC 100887) protein is Probable transcriptional regulatory protein RER_29220.